The chain runs to 253 residues: MERLKCTVSYDGSDFAGFQVQPDHRTVQGVLEKALYNMHKGKSIRIQASGRTDTGVHAVGQVIHFDSPLEIPERNWKQALNTLLPDDVRIQKVEKKTEEFHARYSVKEKEYHYFVLNEEDPNVFQRGYVYHEPRKLDLERMQEACQYLEGTHDFTSFSSAKSSVKGSKVRTLYHVSCHQTGTNIEFIFRGSGFLYNMVRIMMSVLIDVGKGKRNPEDIIDLLASKNRQQIGKTMAPQGLYLWRVSYEENGNNV.

The active-site Nucleophile is the Asp-53. Residue Tyr-111 coordinates substrate.

This sequence belongs to the tRNA pseudouridine synthase TruA family. In terms of assembly, homodimer.

The catalysed reaction is uridine(38/39/40) in tRNA = pseudouridine(38/39/40) in tRNA. Formation of pseudouridine at positions 38, 39 and 40 in the anticodon stem and loop of transfer RNAs. This is tRNA pseudouridine synthase A from Oceanobacillus iheyensis (strain DSM 14371 / CIP 107618 / JCM 11309 / KCTC 3954 / HTE831).